The following is a 1475-amino-acid chain: Mediator of RNA polymerase II transcription subunit 1.1 (1475 aa).

Disordered regions lie at residues 579-600, 645-894, and 908-1475; these read STIG…LTSM, GLAS…KMRE, and PDVE…IDDE. The segment covering 655 to 666 has biased composition (low complexity); it reads PVAAAAAAPGGP. A compositionally biased stretch (polar residues) spans 755-766; sequence QRSSSEQHNPNP. The span at 767–800 shows a compositional bias: low complexity; the sequence is HQMSQYQMQQYQQNQQFRMHQMQQQQQQQFQMQS. Residues 810–819 are compositionally biased toward acidic residues; sequence TDEDSDEECD. Residues 829–838 show a composition bias toward low complexity; sequence STSSRMSSVP. Residues 869–880 are compositionally biased toward pro residues; it reads TPSPLSAPPKPF. Residues 915–929 show a composition bias toward low complexity; it reads QQLSSSSSSSQAEAS. The span at 941 to 952 shows a compositional bias: pro residues; that stretch reads PPKPSSSSAPPP. Composition is skewed to low complexity over residues 969 to 989 and 1037 to 1049; these read QQEQ…SELA and QKPT…STSS. Composition is skewed to basic and acidic residues over residues 1052–1070, 1080–1148, and 1155–1180; these read PPKK…EKLI, VVDD…EKEP, and EKKD…KEYS. Positions 1098 to 1135 form a coiled coil; sequence DRDRDEDREKVRDKEDKAQREKDKKEKERERRRQRDRD. Residues 1181-1193 show a composition bias toward polar residues; that stretch reads KASTTSLIPTLSL. Over residues 1199-1215 the composition is skewed to basic and acidic residues; that stretch reads PKKDTVEEEKKDVKEEA. Residues 1242–1252 are compositionally biased toward low complexity; that stretch reads APVAPAVQQQQ. Residues 1281-1291 are compositionally biased toward pro residues; sequence PLQPPPPPQMT. Positions 1308 to 1317 are enriched in polar residues; sequence PGSSRPSGNR. 2 stretches are compositionally biased toward pro residues: residues 1320-1334 and 1425-1440; these read PLPP…PPPD and PPAP…PKDP.

This sequence belongs to the Mediator complex subunit 1 family. In terms of assembly, component of the Mediator complex.

The protein resides in the nucleus. Component of the Mediator complex, a coactivator involved in the regulated transcription of nearly all RNA polymerase II-dependent genes. Mediator functions as a bridge to convey information from gene-specific regulatory proteins to the basal RNA polymerase II transcription machinery. Mediator is recruited to promoters by direct interactions with regulatory proteins and serves as a scaffold for the assembly of a functional preinitiation complex with RNA polymerase II and the general transcription factors. This is Mediator of RNA polymerase II transcription subunit 1.1 (sop-3) from Caenorhabditis elegans.